The primary structure comprises 412 residues: Trehalose synthase (412 aa).

It belongs to the glycosyltransferase group 1 family. Glycosyltransferase 4 subfamily. In terms of assembly, homodimer. Requires Mg(2+) as cofactor.

It carries out the reaction an NDP-alpha-D-glucose + D-glucose = alpha,alpha-trehalose + a ribonucleoside 5'-diphosphate + H(+). In terms of biological role, synthesizes trehalose from ADP-glucose and glucose. Has a much lower activity toward UDP-glucose and GDP-glucose. The reaction is reversible, the equilibrium strongly favors trehalose synthesis. The protein is Trehalose synthase of Pyrococcus furiosus (strain ATCC 43587 / DSM 3638 / JCM 8422 / Vc1).